The chain runs to 248 residues: Ureidoacrylate amidohydrolase RutB (248 aa).

The active-site Proton acceptor is the Asp41. Lys150 is a catalytic residue. The active-site Nucleophile is Cys183.

This sequence belongs to the isochorismatase family. RutB subfamily.

It carries out the reaction (Z)-3-ureidoacrylate + H2O + H(+) = (Z)-3-aminoacrylate + NH4(+) + CO2. It catalyses the reaction (Z)-3-ureidoacrylate + H2O = (Z)-3-aminoacrylate + carbamate + H(+). The enzyme catalyses (Z)-2-methylureidoacrylate + H2O + H(+) = (Z)-2-methylaminoacrylate + NH4(+) + CO2. Functionally, hydrolyzes ureidoacrylate to form aminoacrylate and carbamate. The carbamate hydrolyzes spontaneously, thereby releasing one of the nitrogen atoms of the pyrimidine ring as ammonia and one of its carbon atoms as CO2. The protein is Ureidoacrylate amidohydrolase RutB of Methylorubrum extorquens (strain DSM 6343 / CIP 106787 / DM4) (Methylobacterium extorquens).